A 234-amino-acid chain; its full sequence is MNNEWLNAYVLHRRPYRETSYIVDFFSLEEGRISAVAKGVKNSKSDKKSLLQPFQHLRLQLSGKSDLKNLRHVESVAPSISLTGTALFCAMYVNELTNRIMPQGLASDGVYSAYEAALLALRDEADIEVTLRQLEFALLDEMGLLPDFTSDVEYEMPIEENGRYHFQLDAGFIQIPDDVVGARGIPGTALLSLSQGEFTPLSKKVAKVLCRDLLKPLIGDKPLKSRELFMTKPR.

It belongs to the RecO family.

Involved in DNA repair and RecF pathway recombination. This chain is DNA repair protein RecO, found in Alteromonas mediterranea (strain DSM 17117 / CIP 110805 / LMG 28347 / Deep ecotype).